The following is a 3707-amino-acid chain: CUB and sushi domain-containing protein 3 (3707 aa).

Basic and acidic residues predominate over residues 1–21; that stretch reads MKGSRKGESRAKESKPREPGT. The disordered stretch occupies residues 1 to 22; it reads MKGSRKGESRAKESKPREPGTR. The Cytoplasmic segment spans residues 1 to 42; sequence MKGSRKGESRAKESKPREPGTRRCAKCGRLDFILKKKMGIKS. The helical transmembrane segment at 43 to 63 threads the bilayer; that stretch reads GFTFWNLVFLLTLSCVKGFIY. The Extracellular portion of the chain corresponds to 64–3630; it reads TCGGTLKGLN…NQPHGTNSSS (3567 aa). 4 disulfides stabilise this stretch: Cys65-Cys91, Cys178-Cys218, Cys204-Cys235, and Cys241-Cys267. The region spanning 65–173 is the CUB 1 domain; sequence CGGTLKGLNG…HGFKVYYEEL (109 aa). Residues Asn73 and Asn90 are each glycosylated (N-linked (GlcNAc...) asparagine). The 62-residue stretch at 176–237 folds into the Sushi 1 domain; that stretch reads SSCGNPGVPP…WDFPVPICRA (62 aa). The region spanning 241 to 345 is the CUB 2 domain; it reads CGGTMRGSSG…RGFSAPYQGS (105 aa). Residues 388 to 437 form a disordered region; the sequence is HRLSEEQRVQVRSLSDSGLDPNTPEDQLSPHQADTQSTSRRPRNAEQIER. A compositionally biased stretch (polar residues) spans 411–426; the sequence is PEDQLSPHQADTQSTS. The 62-residue stretch at 484–545 folds into the Sushi 2 domain; the sequence is NLCPDPGEPE…WSDHRPVCKV (62 aa). Intrachain disulfides connect Cys486-Cys526, Cys512-Cys543, Cys548-Cys574, Cys664-Cys704, Cys690-Cys717, and Cys721-Cys747. A CUB 3 domain is found at 548-659; it reads CGSNLQGPSG…VGFKVNYKEI (112 aa). Residues 662–719 enclose the Sushi 3 domain; sequence ESCGDPGTPLYGIREGDGFSNRDVLRFECQFGFELIGEKSIVCQENNQWSANIPICIF. Residues 721-829 enclose the CUB 4 domain; sequence CLSNFTAPMG…RGFNITYNTF (109 aa). N-linked (GlcNAc...) asparagine glycans are attached at residues Asn724 and Asn823. In terms of domain architecture, Sushi 4 spans 832 to 893; it reads NECPDPGIPI…WSGPIPRCGA (62 aa). Intrachain disulfides connect Cys834–Cys875, Cys860–Cys891, and Cys895–Cys921. Positions 895 to 1003 constitute a CUB 5 domain; that stretch reads CGGHFSAPSG…NGFKIHYESV (109 aa). A glycan (N-linked (GlcNAc...) asparagine) is linked at Asn966. A Sushi 5 domain is found at 1008–1065; sequence YSCLDPGIPVHGRRYGHDFSIGSTVSFSCDPGYRLSHEEPLLCEKNHWWSHPLPTCDA. 3 disulfides stabilise this stretch: Cys1010–Cys1050, Cys1036–Cys1063, and Cys1067–Cys1093. One can recognise a CUB 6 domain in the interval 1067 to 1177; the sequence is CGGDVRGPSG…EGFNITFSEY (111 aa). N-linked (GlcNAc...) asparagine glycans are attached at residues Asn1092, Asn1126, and Asn1171. In terms of domain architecture, Sushi 6 spans 1180–1239; that stretch reads EPCEDPGIPQYGSRVGFSFGVGDTLTFSCSLGYRLEGSSEIICLGGGRRVWSAPLPRCVA. 3 disulfides stabilise this stretch: Cys1182-Cys1222, Cys1208-Cys1237, and Cys1241-Cys1267. Residues 1241-1349 enclose the CUB 7 domain; the sequence is CGASATNNEG…EGFQLVYTSF (109 aa). Residue Asn1280 is glycosylated (N-linked (GlcNAc...) asparagine). Residues 1352-1412 enclose the Sushi 7 domain; sequence SHCEDPGIPQ…WDYPLPSCIA (61 aa). 12 cysteine pairs are disulfide-bonded: Cys1354–Cys1395, Cys1381–Cys1410, Cys1414–Cys1441, Cys1528–Cys1568, Cys1554–Cys1584, Cys1588–Cys1614, Cys1701–Cys1741, Cys1727–Cys1758, Cys1762–Cys1788, Cys1878–Cys1918, Cys1904–Cys1935, and Cys1939–Cys1965. Positions 1414-1523 constitute a CUB 8 domain; the sequence is CGGRFKGESS…SGFAIQFSSS (110 aa). One can recognise a Sushi 8 domain in the interval 1526–1586; that stretch reads TACRDPGVPM…WQPSPPVCIA (61 aa). The N-linked (GlcNAc...) asparagine glycan is linked to Asn1536. The CUB 9 domain occupies 1588-1696; it reads CGGNLTGSSG…TGFHLEYKAK (109 aa). N-linked (GlcNAc...) asparagine glycans are attached at residues Asn1591 and Asn1709. The Sushi 9 domain occupies 1699-1760; it reads ESCFDPGNIM…WNRVLPSCHA (62 aa). One can recognise a CUB 10 domain in the interval 1762–1870; sequence CGSRSTGSEG…KGFHFVYQAV (109 aa). N-linked (GlcNAc...) asparagine glycosylation is present at Asn1781. Residues 1876-1937 enclose the Sushi 10 domain; it reads TQCSSVPEPR…WNDSLPTCIV (62 aa). Asn1929 carries N-linked (GlcNAc...) asparagine glycosylation. The region spanning 1939-2047 is the CUB 11 domain; sequence CGGILTKRKG…AGFHLEYTAI (109 aa). A glycan (N-linked (GlcNAc...) asparagine) is linked at Asn2019. The Sushi 11 domain maps to 2050-2109; it reads DSCPEPQTPSSGIKVGDRYMVGDVVSFQCDQGYSLQGHSHITCMPGPVRRWNYPIPICLA. 3 disulfide bridges follow: Cys2052-Cys2092, Cys2078-Cys2107, and Cys2111-Cys2137. Positions 2111-2219 constitute a CUB 12 domain; that stretch reads CGGAMSDFSG…QGFHIVYQAY (109 aa). N-linked (GlcNAc...) asparagine glycosylation occurs at Asn2155. Residues 2222 to 2281 form the Sushi 12 domain; the sequence is QSCPDPRPFRNGFVIGNDFTVGQTISFECFPGYTLIGNSALTCLHGVSRNWNHPLPRCEA. Disulfide bonds link Cys2224-Cys2264, Cys2250-Cys2279, Cys2283-Cys2309, Cys2395-Cys2437, Cys2423-Cys2452, Cys2456-Cys2484, Cys2569-Cys2610, Cys2596-Cys2627, Cys2632-Cys2674, Cys2658-Cys2689, Cys2694-Cys2739, Cys2725-Cys2754, Cys2759-Cys2799, Cys2785-Cys2812, Cys2817-Cys2857, Cys2843-Cys2870, Cys2875-Cys2915, Cys2901-Cys2928, Cys2933-Cys2977, Cys2963-Cys2990, Cys2995-Cys3035, Cys3021-Cys3048, Cys3056-Cys3096, Cys3082-Cys3109, Cys3114-Cys3155, Cys3141-Cys3168, Cys3173-Cys3215, Cys3199-Cys3228, Cys3233-Cys3273, Cys3259-Cys3286, Cys3291-Cys3331, Cys3317-Cys3344, Cys3352-Cys3393, Cys3379-Cys3406, Cys3411-Cys3453, and Cys3438-Cys3466. Residues 2283 to 2394 form the CUB 13 domain; it reads CGGNITAMNG…LSYHAYQLRV (112 aa). Asn2286 and Asn2291 each carry an N-linked (GlcNAc...) asparagine glycan. The region spanning 2393-2454 is the Sushi 13 domain; it reads RVCQPPPPVP…MDGAPPVCQV (62 aa). A CUB 14 domain is found at 2456 to 2567; sequence CPANELRLDS…KGFRIRYIAF (112 aa). 15 consecutive Sushi domains span residues 2567 to 2629, 2630 to 2691, 2692 to 2756, 2757 to 2814, 2815 to 2872, 2873 to 2930, 2931 to 2992, 2993 to 3050, 3054 to 3111, 3112 to 3170, 3171 to 3230, 3231 to 3288, 3289 to 3346, 3350 to 3408, and 3409 to 3468; these read FYCS…ACQA, ISCG…RCVV, VTCP…YCQI, ISCG…RCLA, GHCG…SCVP, VSCG…VCKV, VNCS…ECIM, IDCG…HCSG, GTCG…ECKA, VQCG…NCTI, ISCG…TCRA, VTCS…QCLP, KFCG…HCIE, TSCE…ECIP, and HSCK…VCEA. Positions 3052–3065 are enriched in low complexity; sequence TTGTCGDPGTPGHG. The tract at residues 3052–3071 is disordered; it reads TTGTCGDPGTPGHGSRQESD. Residues 3631–3651 form a helical membrane-spanning segment; it reads VAIAILVPFFALIFAGFGFYL. Residues 3652–3707 lie on the Cytoplasmic side of the membrane; it reads YKQRTAPKTQYTGCSVHENNNGQAAFENPMYDTNAKSVEGKAVRFDPNLNTVCTMV.

It belongs to the CSMD family. In terms of tissue distribution, expressed in the apical dendrites of postnatal hippocampal neurons (at protein level).

It localises to the cell membrane. Functionally, involved in dendrite development. The polypeptide is CUB and sushi domain-containing protein 3 (Csmd3) (Mus musculus (Mouse)).